We begin with the raw amino-acid sequence, 243 residues long: Small ribosomal subunit protein uS3 (243 aa).

In terms of domain architecture, KH type-2 spans 39-107 (MRKFVMSELK…ETHLNIVEVR (69 aa)). Residues 214–243 (ASERRAMEGDAQGPASRDRDRDRDRRRDNA) form a disordered region. The span at 229–243 (SRDRDRDRDRRRDNA) shows a compositional bias: basic and acidic residues.

Belongs to the universal ribosomal protein uS3 family. In terms of assembly, part of the 30S ribosomal subunit. Forms a tight complex with proteins S10 and S14.

In terms of biological role, binds the lower part of the 30S subunit head. Binds mRNA in the 70S ribosome, positioning it for translation. The sequence is that of Small ribosomal subunit protein uS3 from Rhizobium leguminosarum bv. trifolii (strain WSM2304).